The primary structure comprises 298 residues: Putative insertion sequence ATP-binding protein y4iQ/y4nD/y4sD (298 aa).

114-121 provides a ligand contact to ATP; it reads GPPGGGKS. The tract at residues 276-298 is disordered; that stretch reads RQSEHDETLASDNQHDTFMPTAT.

This sequence belongs to the IS21/IS1162 putative ATP-binding protein family.

The sequence is that of Putative insertion sequence ATP-binding protein y4iQ/y4nD/y4sD from Sinorhizobium fredii (strain NBRC 101917 / NGR234).